The sequence spans 182 residues: Ribosome maturation factor RimM (182 aa).

In terms of domain architecture, PRC barrel spans 103 to 182 (EGDYYWKDLM…TIEVDWDPGF (80 aa)).

This sequence belongs to the RimM family. Binds ribosomal protein uS19.

It is found in the cytoplasm. In terms of biological role, an accessory protein needed during the final step in the assembly of 30S ribosomal subunit, possibly for assembly of the head region. Essential for efficient processing of 16S rRNA. May be needed both before and after RbfA during the maturation of 16S rRNA. It has affinity for free ribosomal 30S subunits but not for 70S ribosomes. The sequence is that of Ribosome maturation factor RimM from Klebsiella pneumoniae subsp. pneumoniae (strain ATCC 700721 / MGH 78578).